The following is an 800-amino-acid chain: DNA topoisomerase 4 subunit A (800 aa).

The Topo IIA-type catalytic domain maps to 31–495; the sequence is LPDVRDGLKP…EIEEIKIDKE (465 aa). Catalysis depends on Y119, which acts as the O-(5'-phospho-DNA)-tyrosine intermediate.

The protein belongs to the type II topoisomerase GyrA/ParC subunit family. ParC type 2 subfamily. As to quaternary structure, heterotetramer composed of ParC and ParE.

The protein resides in the cell membrane. The enzyme catalyses ATP-dependent breakage, passage and rejoining of double-stranded DNA.. Functionally, topoisomerase IV is essential for chromosome segregation. It relaxes supercoiled DNA. Performs the decatenation events required during the replication of a circular DNA molecule. The chain is DNA topoisomerase 4 subunit A from Staphylococcus aureus (strain MW2).